Reading from the N-terminus, the 312-residue chain is Putative S-adenosyl-L-methionine-dependent methyltransferase Mjls_0078 (312 aa).

Residues D134 and 163-164 (DL) each bind S-adenosyl-L-methionine.

This sequence belongs to the UPF0677 family.

Its function is as follows. Exhibits S-adenosyl-L-methionine-dependent methyltransferase activity. The protein is Putative S-adenosyl-L-methionine-dependent methyltransferase Mjls_0078 of Mycobacterium sp. (strain JLS).